The following is a 31-amino-acid chain: Cytochrome b6-f complex subunit 6 (31 aa).

A helical transmembrane segment spans residues 4 to 24 (IISYFLFLIGALTLALVLFIG).

The protein belongs to the PetL family. The 4 large subunits of the cytochrome b6-f complex are cytochrome b6, subunit IV (17 kDa polypeptide, PetD), cytochrome f and the Rieske protein, while the 4 small subunits are PetG, PetL, PetM and PetN. The complex functions as a dimer.

It localises to the plastid. It is found in the chloroplast thylakoid membrane. Its function is as follows. Component of the cytochrome b6-f complex, which mediates electron transfer between photosystem II (PSII) and photosystem I (PSI), cyclic electron flow around PSI, and state transitions. PetL is important for photoautotrophic growth as well as for electron transfer efficiency and stability of the cytochrome b6-f complex. The protein is Cytochrome b6-f complex subunit 6 of Marchantia polymorpha (Common liverwort).